The sequence spans 166 residues: Small ribosomal subunit protein uS5 (166 aa).

In terms of domain architecture, S5 DRBM spans Tyr-12 to Val-75.

The protein belongs to the universal ribosomal protein uS5 family. In terms of assembly, part of the 30S ribosomal subunit. Contacts proteins S4 and S8.

In terms of biological role, with S4 and S12 plays an important role in translational accuracy. Located at the back of the 30S subunit body where it stabilizes the conformation of the head with respect to the body. In Pseudomonas putida (strain ATCC 700007 / DSM 6899 / JCM 31910 / BCRC 17059 / LMG 24140 / F1), this protein is Small ribosomal subunit protein uS5.